The primary structure comprises 602 residues: RecBCD enzyme subunit RecD (602 aa).

ATP is bound at residue 174 to 181 (GGPGTGKT).

The protein belongs to the RecD family. In terms of assembly, heterotrimer of RecB, RecC and RecD. All subunits contribute to DNA-binding.

The enzyme catalyses Couples ATP hydrolysis with the unwinding of duplex DNA at the replication fork by translocating in the 5'-3' direction. This creates two antiparallel DNA single strands (ssDNA). The leading ssDNA polymer is the template for DNA polymerase III holoenzyme which synthesizes a continuous strand.. It carries out the reaction ATP + H2O = ADP + phosphate + H(+). Functionally, a helicase/nuclease that prepares dsDNA breaks (DSB) for recombinational DNA repair. Binds to DSBs and unwinds DNA via a highly rapid and processive ATP-dependent bidirectional helicase activity. Unwinds dsDNA until it encounters a Chi (crossover hotspot instigator) sequence from the 3' direction. Cuts ssDNA a few nucleotides 3' to the Chi site. The properties and activities of the enzyme are changed at Chi. The Chi-altered holoenzyme produces a long 3'-ssDNA overhang and facilitates RecA-binding to the ssDNA for homologous DNA recombination and repair. Holoenzyme degrades any linearized DNA that is unable to undergo homologous recombination. In the holoenzyme this subunit has ssDNA-dependent ATPase and 5'-3' helicase activity. When added to pre-assembled RecBC greatly stimulates nuclease activity and augments holoenzyme processivity. Negatively regulates the RecA-loading ability of RecBCD. The polypeptide is RecBCD enzyme subunit RecD (Buchnera aphidicola subsp. Schizaphis graminum (strain Sg)).